A 300-amino-acid chain; its full sequence is Quinolinate synthase (300 aa).

The iminosuccinate site is built by His21 and Ser38. Cys83 is a [4Fe-4S] cluster binding site. Residues 109–111 (YVN) and Ser126 each bind iminosuccinate. A [4Fe-4S] cluster-binding site is contributed by Cys170. Iminosuccinate is bound by residues 196-198 (HPE) and Thr213. Cys256 serves as a coordination point for [4Fe-4S] cluster.

It belongs to the quinolinate synthase family. Type 2 subfamily. As to quaternary structure, monomer. Homodimer. [4Fe-4S] cluster serves as cofactor.

The protein localises to the cytoplasm. The catalysed reaction is iminosuccinate + dihydroxyacetone phosphate = quinolinate + phosphate + 2 H2O + H(+). Its pathway is cofactor biosynthesis; NAD(+) biosynthesis; quinolinate from iminoaspartate: step 1/1. Its function is as follows. Catalyzes the condensation of iminoaspartate with dihydroxyacetone phosphate to form quinolinate. The chain is Quinolinate synthase from Pyrococcus horikoshii (strain ATCC 700860 / DSM 12428 / JCM 9974 / NBRC 100139 / OT-3).